A 103-amino-acid polypeptide reads, in one-letter code: Nucleoid-associated protein SUN_2278 (103 aa).

Belongs to the YbaB/EbfC family. Homodimer.

Its subcellular location is the cytoplasm. It localises to the nucleoid. Its function is as follows. Binds to DNA and alters its conformation. May be involved in regulation of gene expression, nucleoid organization and DNA protection. This is Nucleoid-associated protein SUN_2278 from Sulfurovum sp. (strain NBC37-1).